A 267-amino-acid polypeptide reads, in one-letter code: Tryptophan synthase alpha chain (267 aa).

Active-site proton acceptor residues include Glu49 and Asp60.

It belongs to the TrpA family. As to quaternary structure, tetramer of two alpha and two beta chains.

It carries out the reaction (1S,2R)-1-C-(indol-3-yl)glycerol 3-phosphate + L-serine = D-glyceraldehyde 3-phosphate + L-tryptophan + H2O. Its pathway is amino-acid biosynthesis; L-tryptophan biosynthesis; L-tryptophan from chorismate: step 5/5. Functionally, the alpha subunit is responsible for the aldol cleavage of indoleglycerol phosphate to indole and glyceraldehyde 3-phosphate. The polypeptide is Tryptophan synthase alpha chain (Salinispora tropica (strain ATCC BAA-916 / DSM 44818 / JCM 13857 / NBRC 105044 / CNB-440)).